The following is a 123-amino-acid chain: Large ribosomal subunit protein bL19 (123 aa).

The protein belongs to the bacterial ribosomal protein bL19 family.

In terms of biological role, this protein is located at the 30S-50S ribosomal subunit interface and may play a role in the structure and function of the aminoacyl-tRNA binding site. The sequence is that of Large ribosomal subunit protein bL19 from Ureaplasma parvum serovar 3 (strain ATCC 27815 / 27 / NCTC 11736).